The following is a 308-amino-acid chain: Ferrochelatase (308 aa).

Residues His-167 and Glu-239 each coordinate Fe cation.

The protein belongs to the ferrochelatase family.

Its subcellular location is the cytoplasm. The enzyme catalyses heme b + 2 H(+) = protoporphyrin IX + Fe(2+). The protein operates within porphyrin-containing compound metabolism; protoheme biosynthesis; protoheme from protoporphyrin-IX: step 1/1. In terms of biological role, catalyzes the ferrous insertion into protoporphyrin IX. The chain is Ferrochelatase from Thermoplasma acidophilum (strain ATCC 25905 / DSM 1728 / JCM 9062 / NBRC 15155 / AMRC-C165).